The sequence spans 174 residues: MTYVLFLLSVSLVMGFVGFSSKPSPIYGGLVLIVSGVVGCTIILNYGGGYMGLMVFLIYLGGMMVVFGYTTAMAIEEYPEAWGSGVEVLVSVLVGLAMEVGLVLWVKEYDGVVVVVNFNSVGSWMIYEGEGPGLIREDPIGAGALYDYGRWLVVVTGWTLFVGVYIVIEIARGN.

6 helical membrane-spanning segments follow: residues 1-21, 24-44, 47-67, 86-106, 111-131, and 151-171; these read MTYV…GFSS, SPIY…TIIL, GGGY…MVVF, VEVL…VLWV, GVVV…EGEG, and WLVV…IEIA.

This sequence belongs to the complex I subunit 6 family. Core subunit of respiratory chain NADH dehydrogenase (Complex I) which is composed of 45 different subunits.

Its subcellular location is the mitochondrion inner membrane. The catalysed reaction is a ubiquinone + NADH + 5 H(+)(in) = a ubiquinol + NAD(+) + 4 H(+)(out). Functionally, core subunit of the mitochondrial membrane respiratory chain NADH dehydrogenase (Complex I) which catalyzes electron transfer from NADH through the respiratory chain, using ubiquinone as an electron acceptor. Essential for the catalytic activity and assembly of complex I. This is NADH-ubiquinone oxidoreductase chain 6 (MT-ND6) from Pan paniscus (Pygmy chimpanzee).